The following is a 180-amino-acid chain: Endoribonuclease YbeY (180 aa).

Residues histidine 118, histidine 122, and histidine 128 each coordinate Zn(2+).

The protein belongs to the endoribonuclease YbeY family. Requires Zn(2+) as cofactor.

The protein resides in the cytoplasm. Single strand-specific metallo-endoribonuclease involved in late-stage 70S ribosome quality control and in maturation of the 3' terminus of the 16S rRNA. In Rhodococcus opacus (strain B4), this protein is Endoribonuclease YbeY.